Consider the following 194-residue polypeptide: ATP-dependent Clp protease proteolytic subunit (194 aa).

Serine 98 (nucleophile) is an active-site residue. The active site involves histidine 123.

The protein belongs to the peptidase S14 family. In terms of assembly, fourteen ClpP subunits assemble into 2 heptameric rings which stack back to back to give a disk-like structure with a central cavity, resembling the structure of eukaryotic proteasomes.

Its subcellular location is the cytoplasm. It catalyses the reaction Hydrolysis of proteins to small peptides in the presence of ATP and magnesium. alpha-casein is the usual test substrate. In the absence of ATP, only oligopeptides shorter than five residues are hydrolyzed (such as succinyl-Leu-Tyr-|-NHMec, and Leu-Tyr-Leu-|-Tyr-Trp, in which cleavage of the -Tyr-|-Leu- and -Tyr-|-Trp bonds also occurs).. Its function is as follows. Cleaves peptides in various proteins in a process that requires ATP hydrolysis. Has a chymotrypsin-like activity. Plays a major role in the degradation of misfolded proteins. The polypeptide is ATP-dependent Clp protease proteolytic subunit (Alkaliphilus metalliredigens (strain QYMF)).